The chain runs to 1557 residues: Probable kinase PglW (1557 aa).

An NERD domain is found at Ser-12–Asn-130. Protein kinase domains lie at Glu-195 to Val-490 and Trp-530 to Leu-816. Residues Leu-536 to Ala-544 and Lys-564 each bind ATP. 2 disordered regions span residues Asp-615–Glu-634 and Thr-821–Arg-861. The segment covering Pro-830 to Asp-849 has biased composition (low complexity).

Belongs to the protein kinase superfamily. Ser/Thr protein kinase family.

In terms of biological role, BREX systems (bacteriophage exclusion) provide immunity against bacteriophage. Part of a type 2 BREX system. Previously called the phage growth limitation (Pgl) system, it confers protection against bacteriophage phiC31. The bacteria allows one cycle of phage infection, but subsequent cycles are impaired, protecting the original bacterial colony. The system undergoes high rates (10(-3) to 10(-4)) of phase reversion, i.e. loss and regain of phiC31 resistance. When the pglW-pglX-pglY-pglZ genes are transformed into a susceptible S.lividans (strain 1326) they confer resistance to infection by phage phiC31 and phiBT1; all 4 genes are necessary. The proteins has kinase domains and might bind DNA. Functionally, autophosphorylates when synthesized in vitro, cannot be expressed in E.coli. The chain is Probable kinase PglW from Streptomyces coelicolor (strain ATCC BAA-471 / A3(2) / M145).